The primary structure comprises 276 residues: Undecaprenyl-diphosphatase (276 aa).

The next 8 helical transmembrane spans lie at 1-21 (MSWL…FLPV), 39-59 (AGAS…LIYF), 84-104 (YRLG…GLLF), 115-135 (LWLV…AEYY), 159-179 (LALM…LFLG), 188-208 (FGFL…LPDA), 222-242 (QLIV…AWFL), and 253-273 (FVGY…TGVL).

The protein belongs to the UppP family.

The protein resides in the cell membrane. The enzyme catalyses di-trans,octa-cis-undecaprenyl diphosphate + H2O = di-trans,octa-cis-undecaprenyl phosphate + phosphate + H(+). Its function is as follows. Catalyzes the dephosphorylation of undecaprenyl diphosphate (UPP). Confers resistance to bacitracin. This Mycolicibacterium smegmatis (strain ATCC 700084 / mc(2)155) (Mycobacterium smegmatis) protein is Undecaprenyl-diphosphatase.